A 524-amino-acid polypeptide reads, in one-letter code: NAD(P)H-quinone oxidoreductase chain 4, chloroplastic (524 aa).

14 consecutive transmembrane segments (helical) span residues 4-24, 31-51, 87-107, 113-133, 134-154, 167-187, 211-231, 242-262, 275-295, 308-328, 330-350, 386-406, 417-437, and 465-485; these read YPWL…IPLI, LIRW…TYVF, IALV…AWPV, LFYF…LAQD, LLLF…LLSM, FILY…TISL, ILVY…FPFH, HYST…YGFI, IFAP…ALVS, SSVS…DLGL, GAIL…FLAG, LALP…GIVA, IITC…LSMV, and VFII…PDLT.

This sequence belongs to the complex I subunit 4 family.

It is found in the plastid. It localises to the chloroplast thylakoid membrane. The enzyme catalyses a plastoquinone + NADH + (n+1) H(+)(in) = a plastoquinol + NAD(+) + n H(+)(out). It carries out the reaction a plastoquinone + NADPH + (n+1) H(+)(in) = a plastoquinol + NADP(+) + n H(+)(out). This is NAD(P)H-quinone oxidoreductase chain 4, chloroplastic from Staurastrum punctulatum (Green alga).